The primary structure comprises 183 residues: DELTA-miturgitoxin-Cp1c (183 aa).

The first 20 residues, 1-20 (MKFSLFFSVFFLAVLHACLS), serve as a signal peptide directing secretion. A propeptide spanning residues 21 to 47 (ESEIDLEDEEHFMSSDSFLSEIQDESR) is cleaved from the precursor. The short motif at 44-47 (DESR) is the Processing quadruplet motif element. Cystine bridges form between C51-C66, C58-C75, C65-C88, C77-C86, C115-C130, C122-C139, C129-C157, and C141-C155. The predicted alpha-helix stretch occupies residues 164–177 (QAIEGALRIAKKLI). W181 is subject to Tryptophan amide.

Belongs to the neurotoxin 19 (CSTX) family. Double-CSTX subfamily. Cleavage of the propeptide depends on the processing quadruplet motif (XXXR, with at least one of X being E). As to expression, expressed by the venom gland.

The protein resides in the secreted. It is found in the target cell membrane. Its function is as follows. Spider venom toxin that exhibits cytolytic activity by forming an alpha-helix across the membrane. Lethal to insect larvae. Causes instant paralysis and death in the larvae of the flesh fly (S.carnaria) at doses of 20 ug/g, at doses of less than 10 ug/g causes reversible paralysis. Has cytolytic activity against insect Sf9 cells. Causes stable and irreversible depolarization of fly muscle fibers, leading to contracture at higher toxin concentrations. Destabilizes membranes. The polypeptide is DELTA-miturgitoxin-Cp1c (Cheiracanthium punctorium (Yellow sac spider)).